A 207-amino-acid chain; its full sequence is Large ribosomal subunit protein uL4 (207 aa).

The tract at residues 50-75 is disordered; that stretch reads KTKTRSEVAGSGKKPFKQKGTGNARQ.

This sequence belongs to the universal ribosomal protein uL4 family. In terms of assembly, part of the 50S ribosomal subunit.

One of the primary rRNA binding proteins, this protein initially binds near the 5'-end of the 23S rRNA. It is important during the early stages of 50S assembly. It makes multiple contacts with different domains of the 23S rRNA in the assembled 50S subunit and ribosome. In terms of biological role, forms part of the polypeptide exit tunnel. This is Large ribosomal subunit protein uL4 from Pelobacter propionicus (strain DSM 2379 / NBRC 103807 / OttBd1).